A 229-amino-acid polypeptide reads, in one-letter code: Octanoyltransferase (229 aa).

The 176-residue stretch at 45 to 220 (ATAVDELWVV…ELARQFCFVL (176 aa)) folds into the BPL/LPL catalytic domain. Substrate is bound by residues 84 to 91 (RGGQVTYH), 151 to 153 (ALG), and 164 to 166 (GVA). The Acyl-thioester intermediate role is filled by C182.

This sequence belongs to the LipB family.

It is found in the cytoplasm. It catalyses the reaction octanoyl-[ACP] + L-lysyl-[protein] = N(6)-octanoyl-L-lysyl-[protein] + holo-[ACP] + H(+). The protein operates within protein modification; protein lipoylation via endogenous pathway; protein N(6)-(lipoyl)lysine from octanoyl-[acyl-carrier-protein]: step 1/2. Functionally, catalyzes the transfer of endogenously produced octanoic acid from octanoyl-acyl-carrier-protein onto the lipoyl domains of lipoate-dependent enzymes. Lipoyl-ACP can also act as a substrate although octanoyl-ACP is likely to be the physiological substrate. In Xylella fastidiosa (strain 9a5c), this protein is Octanoyltransferase.